The sequence spans 534 residues: NEDD8-activating enzyme E1 regulatory subunit (534 aa).

Alanine 2 is modified (N-acetylalanine). N6-acetyllysine occurs at positions 6 and 341. The tract at residues aspartate 331–asparagine 344 is interaction with UBA3.

The protein belongs to the ubiquitin-activating E1 family. ULA1 subfamily. Heterodimer of UBA3 and NAE1. The complex binds NEDD8 and UBE2M. Binds APP and TP53BP2. Post-translationally, ubiquitinated by TRIP12, leading to its degradation by the proteasome. As to expression, expressed throughout the brain. In hippocampus, strongly expressed in granule cells and in the pyramidal cell layer. Strongly expressed in the piriform cortex. In the cerebellum, expressed only in Purkinje cells.

The protein localises to the cell membrane. The protein operates within protein modification; protein neddylation. With respect to regulation, binding of TP53BP2 to the regulatory subunit NAE1 decreases neddylation activity. Regulatory subunit of the dimeric UBA3-NAE1 E1 enzyme. E1 activates NEDD8 by first adenylating its C-terminal glycine residue with ATP, thereafter linking this residue to the side chain of the catalytic cysteine, yielding a NEDD8-UBA3 thioester and free AMP. E1 finally transfers NEDD8 to the catalytic cysteine of UBE2M. Necessary for cell cycle progression through the S-M checkpoint. Overexpression of NAE1 causes apoptosis through deregulation of NEDD8 conjugation. The covalent attachment of NEDD8 to target proteins is known as 'neddylation' and the process is involved in the regulation of cell growth, viability and development. The polypeptide is NEDD8-activating enzyme E1 regulatory subunit (Nae1) (Rattus norvegicus (Rat)).